A 365-amino-acid chain; its full sequence is Probable L-tyrosine/L-aspartate decarboxylase (365 aa).

An N6-(pyridoxal phosphate)lysine modification is found at lysine 225.

Belongs to the group II decarboxylase family. MfnA subfamily. The cofactor is pyridoxal 5'-phosphate.

It carries out the reaction L-tyrosine + H(+) = tyramine + CO2. The enzyme catalyses L-aspartate + H(+) = beta-alanine + CO2. It functions in the pathway cofactor biosynthesis; methanofuran biosynthesis. Its pathway is cofactor biosynthesis; coenzyme A biosynthesis. Catalyzes the decarboxylation of L-tyrosine to produce tyramine for methanofuran biosynthesis. Can also catalyze the decarboxylation of L-aspartate to produce beta-alanine for coenzyme A (CoA) biosynthesis. The protein is Probable L-tyrosine/L-aspartate decarboxylase of Methanocorpusculum labreanum (strain ATCC 43576 / DSM 4855 / Z).